Consider the following 300-residue polypeptide: uncharacterized protein (300 aa).

Histidine 274 serves as the catalytic Proton acceptor.

This sequence belongs to the AB hydrolase superfamily. Monomer.

It catalyses the reaction a carboxylic ester + H2O = an alcohol + a carboxylate + H(+). This is an uncharacterized protein from Bacillus subtilis (strain 168).